The following is a 254-amino-acid chain: Triosephosphate isomerase (254 aa).

Residue 9-11 (NWK) coordinates substrate. H96 serves as the catalytic Electrophile. Catalysis depends on E169, which acts as the Proton acceptor. Residues G175, S215, and 236–237 (GG) contribute to the substrate site.

This sequence belongs to the triosephosphate isomerase family. As to quaternary structure, homodimer.

The protein localises to the cytoplasm. The catalysed reaction is D-glyceraldehyde 3-phosphate = dihydroxyacetone phosphate. The protein operates within carbohydrate biosynthesis; gluconeogenesis. It functions in the pathway carbohydrate degradation; glycolysis; D-glyceraldehyde 3-phosphate from glycerone phosphate: step 1/1. Functionally, involved in the gluconeogenesis. Catalyzes stereospecifically the conversion of dihydroxyacetone phosphate (DHAP) to D-glyceraldehyde-3-phosphate (G3P). The polypeptide is Triosephosphate isomerase (Borrelia recurrentis (strain A1)).